The chain runs to 213 residues: Nicolin-1 (213 aa).

In terms of assembly, part of the neuronal tubulin polyglutamylase complex which contains TPGS1, TPGS2, TTLL1, LRRC49 and NICN1. High expression level is found in brain, testis, liver and kidney. Weak expression in spleen, leukocytes, small intestine and colon.

It localises to the nucleus. The chain is Nicolin-1 (NICN1) from Homo sapiens (Human).